Consider the following 343-residue polypeptide: Phosphate acyltransferase (343 aa).

It belongs to the PlsX family. In terms of assembly, homodimer. Probably interacts with PlsY.

It is found in the cytoplasm. The catalysed reaction is a fatty acyl-[ACP] + phosphate = an acyl phosphate + holo-[ACP]. Its pathway is lipid metabolism; phospholipid metabolism. Functionally, catalyzes the reversible formation of acyl-phosphate (acyl-PO(4)) from acyl-[acyl-carrier-protein] (acyl-ACP). This enzyme utilizes acyl-ACP as fatty acyl donor, but not acyl-CoA. This Haemophilus ducreyi (strain 35000HP / ATCC 700724) protein is Phosphate acyltransferase.